A 402-amino-acid chain; its full sequence is Elongation factor Tu (402 aa).

One can recognise a tr-type G domain in the interval Lys-10–Glu-212. The interval Gly-19–Thr-26 is G1. Gly-19–Thr-26 is a GTP binding site. Position 26 (Thr-26) interacts with Mg(2+). The G2 stretch occupies residues Gly-60–Ala-64. The interval Asp-81–Gly-84 is G3. GTP-binding positions include Asp-81 to His-85 and Asn-136 to Asp-139. Residues Asn-136–Asp-139 are G4. Residues Ser-177–Phe-179 are G5.

The protein belongs to the TRAFAC class translation factor GTPase superfamily. Classic translation factor GTPase family. EF-Tu/EF-1A subfamily. In terms of assembly, monomer.

It localises to the cytoplasm. The enzyme catalyses GTP + H2O = GDP + phosphate + H(+). In terms of biological role, GTP hydrolase that promotes the GTP-dependent binding of aminoacyl-tRNA to the A-site of ribosomes during protein biosynthesis. This Aliarcobacter butzleri (strain RM4018) (Arcobacter butzleri) protein is Elongation factor Tu.